Reading from the N-terminus, the 305-residue chain is Acetylglutamate kinase (305 aa).

Substrate contacts are provided by residues 80-81 (GG), Arg-102, and Asn-196.

This sequence belongs to the acetylglutamate kinase family. ArgB subfamily.

It localises to the cytoplasm. The enzyme catalyses N-acetyl-L-glutamate + ATP = N-acetyl-L-glutamyl 5-phosphate + ADP. It functions in the pathway amino-acid biosynthesis; L-arginine biosynthesis; N(2)-acetyl-L-ornithine from L-glutamate: step 2/4. In terms of biological role, catalyzes the ATP-dependent phosphorylation of N-acetyl-L-glutamate. This is Acetylglutamate kinase from Chlorobium luteolum (strain DSM 273 / BCRC 81028 / 2530) (Pelodictyon luteolum).